The sequence spans 703 residues: Leucine zipper putative tumor suppressor 3 (703 aa).

3 disordered regions span residues methionine 1–phenylalanine 22, arginine 40–leucine 190, and phenylalanine 204–proline 347. Low complexity predominate over residues glycine 96–glycine 107. Basic and acidic residues predominate over residues asparagine 109 to valine 124. Residues histidine 205 to threonine 218 are compositionally biased toward polar residues. A compositionally biased stretch (low complexity) spans aspartate 251 to serine 268. The span at serine 290–glycine 299 shows a compositional bias: gly residues. Positions glycine 304 to serine 324 are enriched in low complexity. Residues glycine 325 to glycine 336 show a composition bias toward gly residues. A phosphoserine mark is found at serine 346 and serine 348. Coiled-coil stretches lie at residues serine 348–aspartate 526 and threonine 600–glutamate 669. The disordered stretch occupies residues arginine 665 to isoleucine 703. The span at histidine 683–isoleucine 703 shows a compositional bias: basic and acidic residues.

This sequence belongs to the LZTS3 family. As to quaternary structure, interacts (via C-terminus) with SHANK3 (via PDZ domain). Interacts (via coiled coil) with SIPA1L1. Can form homooligomers. As to expression, detected in brain, with highest expression in brain cortex, caudate putamen, cerebellum and hippocampus. Detected in neuropil (at protein level). Detected in brain and kidney.

It localises to the synapse. Its subcellular location is the postsynaptic density. The protein resides in the cell projection. It is found in the dendritic spine. The protein localises to the dendrite. It localises to the cytoplasm. Its subcellular location is the cytoskeleton. Functionally, may be involved in promoting the maturation of dendritic spines, probably via regulating SIPA1L1 levels at the postsynaptic density of synapses. This Rattus norvegicus (Rat) protein is Leucine zipper putative tumor suppressor 3.